Here is a 289-residue protein sequence, read N- to C-terminus: 4-hydroxy-tetrahydrodipicolinate synthase (289 aa).

Thr43 is a binding site for pyruvate. Tyr131 acts as the Proton donor/acceptor in catalysis. Residue Lys160 is the Schiff-base intermediate with substrate of the active site. Val200 contacts pyruvate.

This sequence belongs to the DapA family. As to quaternary structure, homotetramer; dimer of dimers.

The protein localises to the cytoplasm. It carries out the reaction L-aspartate 4-semialdehyde + pyruvate = (2S,4S)-4-hydroxy-2,3,4,5-tetrahydrodipicolinate + H2O + H(+). The protein operates within amino-acid biosynthesis; L-lysine biosynthesis via DAP pathway; (S)-tetrahydrodipicolinate from L-aspartate: step 3/4. In terms of biological role, catalyzes the condensation of (S)-aspartate-beta-semialdehyde [(S)-ASA] and pyruvate to 4-hydroxy-tetrahydrodipicolinate (HTPA). This chain is 4-hydroxy-tetrahydrodipicolinate synthase, found in Methanococcus maripaludis (strain C5 / ATCC BAA-1333).